The primary structure comprises 456 residues: Adenylyltransferase and sulfurtransferase uba4 (456 aa).

Residues G101, D122, 129 to 133, K146, and 161 to 162 contribute to the ATP site; these read SNLHR and DH. 2 residues coordinate Zn(2+): C210 and C213. C227 (glycyl thioester intermediate; for adenylyltransferase activity) is an active-site residue. Residues C300 and C303 each contribute to the Zn(2+) site. In terms of domain architecture, Rhodanese spans 350 to 454; that stretch reads KEKEHLLIDV…WKEQVDGSWP (105 aa). Residue C409 is the Cysteine persulfide intermediate; for sulfurtransferase activity of the active site.

The protein in the N-terminal section; belongs to the HesA/MoeB/ThiF family. UBA4 subfamily. Requires Zn(2+) as cofactor.

It localises to the cytoplasm. It is found in the cytosol. It catalyses the reaction [molybdopterin-synthase sulfur-carrier protein]-C-terminal Gly-Gly + ATP + H(+) = [molybdopterin-synthase sulfur-carrier protein]-C-terminal Gly-Gly-AMP + diphosphate. The enzyme catalyses [molybdopterin-synthase sulfur-carrier protein]-C-terminal Gly-Gly-AMP + S-sulfanyl-L-cysteinyl-[cysteine desulfurase] + AH2 = [molybdopterin-synthase sulfur-carrier protein]-C-terminal-Gly-aminoethanethioate + L-cysteinyl-[cysteine desulfurase] + A + AMP + 2 H(+). It functions in the pathway tRNA modification; 5-methoxycarbonylmethyl-2-thiouridine-tRNA biosynthesis. Plays a central role in 2-thiolation of mcm(5)S(2)U at tRNA wobble positions of cytosolic tRNA(Lys), tRNA(Glu) and tRNA(Gln). Also essential during biosynthesis of the molybdenum cofactor. Acts by mediating the C-terminal thiocarboxylation of sulfur carriers urm1 and mocs2a. Its N-terminus first activates urm1 and mocs2a as acyl-adenylates (-COAMP), then the persulfide sulfur on the catalytic cysteine is transferred to urm1 and mocs2a to form thiocarboxylation (-COSH) of their C-terminus. The reaction probably involves hydrogen sulfide that is generated from the persulfide intermediate and that acts as a nucleophile towards urm1 and mocs2a. Subsequently, a transient disulfide bond is formed. Does not use thiosulfate as sulfur donor; nfs1 probably acting as a sulfur donor for thiocarboxylation reactions. The polypeptide is Adenylyltransferase and sulfurtransferase uba4 (Sclerotinia sclerotiorum (strain ATCC 18683 / 1980 / Ss-1) (White mold)).